We begin with the raw amino-acid sequence, 223 residues long: uncharacterized protein (223 aa).

The Response regulatory domain occupies 5-116; that stretch reads RILIVEDDVM…ELLLRMRNML (112 aa). Aspartate 52 is subject to 4-aspartylphosphate. A DNA-binding region (ompR/PhoB-type) is located at residues 121 to 219; that stretch reads GTFTQIKHLY…IYGEGYRLNT (99 aa).

In terms of processing, phosphorylated by YbdK.

Its subcellular location is the cytoplasm. Member of the two-component regulatory system YbdK/YbdJ. This is an uncharacterized protein from Bacillus subtilis (strain 168).